Here is a 248-residue protein sequence, read N- to C-terminus: MAGHSKWANIKHKKAKEDAKRGKIFTKLIREITVAARLGGGDKDANPRLRAAIATALANNMSKDTIERAIVKGAGGDESANVEEVRYEGYGPGGVAIIVDCMTDNRNRTVGEVRHAFTKSGGNLGTDGSVAYMFTKRGIISFAPGVDEDALMEVALEAGAEDIITHEDGSIDVYTDPHDFSDIQEVLIEKGFNSENAEVTFDAETKAELDTETAEKVMALIDKLEDLDYVQSVYSNANFTQELIEQIG.

It belongs to the TACO1 family.

The protein localises to the cytoplasm. This is Probable transcriptional regulatory protein FTL_0929 from Francisella tularensis subsp. holarctica (strain LVS).